Here is a 227-residue protein sequence, read N- to C-terminus: Mitochondrial cardiolipin hydrolase (227 aa).

The Mitochondrial intermembrane segment spans residues 1-14 (MDVFKQMSFKELMK). A helical transmembrane segment spans residues 15 to 33 (VLGLGTVAFVLGVEWLNWL). Over 34 to 227 (TRRLRDSRGP…LQSKNGQIKK (194 aa)) the chain is Cytoplasmic. The PLD phosphodiesterase domain occupies 153–180 (SAVHMHHKFALVDGRKLISGSLNWTLTA). Residues histidine 158, lysine 160, and aspartate 165 contribute to the active site.

The protein belongs to the phospholipase D family. MitoPLD/Zucchini subfamily. Homodimer.

Its subcellular location is the mitochondrion outer membrane. The catalysed reaction is a cardiolipin + H2O = a 1,2-diacyl-sn-glycero-3-phospho-(1'-sn-glycerol) + a 1,2-diacyl-sn-glycero-3-phosphate + H(+). Presents phospholipase and nuclease activities, depending on the different physiological conditions. Plays a key role in mitochondrial fusion and fission via its phospholipase activity. In its phospholipase role, it uses the mitochondrial lipid cardiolipin as substrate to generate phosphatidate (PA or 1,2-diacyl-sn-glycero-3-phosphate), a second messenger signaling lipid. Production of PA facilitates Mitofusin-mediated fusion, whereas the cleavage of PA by the Lipin family of phosphatases produces diacylgycerol (DAG) which promotes mitochondrial fission. Regulates mitochondrial shape through facilitating mitochondrial fusion. During spermatogenesis, plays a critical role in PIWI-interacting RNA (piRNA) biogenesis. piRNAs provide essential protection against the activity of mobile genetic elements. piRNA-mediated transposon silencing is thus critical for maintaining genome stability, in particular in germline cells when transposons are mobilized as a consequence of wide-spread genomic demethylation. Has been shown to be a backbone-non-specific, single strand-specific nuclease, cleaving either RNA or DNA substrates with similar affinity. Produces 5' phosphate and 3' hydroxyl termini, suggesting it could directly participate in the processing of primary piRNA transcripts. Has been proposed to act as a cardiolipin hydrolase to generate phosphatidic acid at mitochondrial surface. Although it cannot be excluded that it can act as a phospholipase in some circumstances, this activity could not be confirmed. In Danio rerio (Zebrafish), this protein is Mitochondrial cardiolipin hydrolase (pld6).